Reading from the N-terminus, the 473-residue chain is Dynein axonemal assembly factor 11 (473 aa).

4 LRR repeats span residues 22–43, 45–66, 67–88, and 89–110; these read SLEE…DKWC, DLKI…SKLK, KLEY…EGCE, and WLTK…KTLT. In terms of domain architecture, LRRCT spans 123-161; the sequence is NPCADFDGYRQFVVVTLQQLKWLDGKEIERSERIQALQN. A coiled-coil region spans residues 153–205; it reads SERIQALQNYTSVEQQIREQEKAYCLRRAKEKEEAQRKLEEENESEDKKKSST. Composition is skewed to basic and acidic residues over residues 188-202 and 273-283; these read QRKL…DKKK and EKQRKAQDKLS. Disordered regions lie at residues 188-244, 273-292, and 387-473; these read QRKL…TKES, EKQR…AKPP, and VGEM…PPLI. Positions 305-402 constitute a CS domain; the sequence is VNEAKLDFSL…GGQRTPTSVK (98 aa). A compositionally biased stretch (low complexity) spans 397–408; sequence TPTSVKTTSTSS. Positions 417–431 are enriched in basic and acidic residues; the sequence is KQIERLEVDPSKHSC. Over residues 456-467 the composition is skewed to acidic residues; that stretch reads PSEEDPDFEDNP.

The protein belongs to the tilB family. As to quaternary structure, interacts (via CS domain) with ZMYND10 (via C-terminus). As to expression, mainly expressed in cells with motile cilia. Expressed in epithelial cells of the trachea, testis and ependymal cells of the cerebral ventricles. In testis, abundant expression in late prophase of meiosis I with a dramatic decrease after the first meiotic division (at protein level).

It is found in the cytoplasm. Its subcellular location is the cell projection. The protein localises to the cilium. The protein resides in the dynein axonemal particle. It localises to the flagellum. Its function is as follows. Involved in dynein arm assembly, is important for expression and transporting outer dynein arm (ODA) proteins from the cytoplasm to the cilia. Acts as a crucial component in the formation and motility of spermatozoal flagella. The polypeptide is Dynein axonemal assembly factor 11 (Dnaaf11) (Mus musculus (Mouse)).